A 453-amino-acid chain; its full sequence is tRNA modification GTPase MnmE (453 aa).

Positions 28, 90, and 129 each coordinate (6S)-5-formyl-5,6,7,8-tetrahydrofolate. Residues 224–375 (GLRVAIIGRP…LSSALLKLCG (152 aa)) form the TrmE-type G domain. K(+) is bound at residue N234. Residues 234–239 (NVGKSS), 253–259 (TDLPGTT), 278–281 (DTAG), and 356–358 (SAR) each bind GTP. S238 contributes to the Mg(2+) binding site. Residues T253, L255, and T258 each coordinate K(+). Residue T259 coordinates Mg(2+). K453 contributes to the (6S)-5-formyl-5,6,7,8-tetrahydrofolate binding site.

This sequence belongs to the TRAFAC class TrmE-Era-EngA-EngB-Septin-like GTPase superfamily. TrmE GTPase family. As to quaternary structure, homodimer. Heterotetramer of two MnmE and two MnmG subunits. K(+) serves as cofactor.

It is found in the cytoplasm. Functionally, exhibits a very high intrinsic GTPase hydrolysis rate. Involved in the addition of a carboxymethylaminomethyl (cmnm) group at the wobble position (U34) of certain tRNAs, forming tRNA-cmnm(5)s(2)U34. In Synechococcus sp. (strain RCC307), this protein is tRNA modification GTPase MnmE.